Here is a 381-residue protein sequence, read N- to C-terminus: Gas vesicle protein C (381 aa).

Tandem repeats lie at residues 22–59 (QAFAAYADEFAADVDDKRDVSELVDGIDTLRTEMNSTN), 60–84 (DAFRAYSEEFAADVEHFHTSVADRR), 85–122 (DAFDAYADIFATDVAEMQDVSDLLAAIDDLRAEMDETH), 123–160 (EAFDAYADAFVTDVATLRDVSDLLTAISELQSEFVSVQ), 161–192 (GEFNGYASEFGADIDQFHAVVAEKRDGHKDVA), 193–232 (DAFLQYREEFHGVEVQSLLDNIAAFQREMGDYRKAFETTE), and 233–274 (EAFA…IPPI). Residues 22 to 274 (QAFAAYADEF…TETEVDIPPI (253 aa)) are 7 X approximate tandem repeats. Positions 261-333 (AVTGTETEVD…EDDQFLDDET (73 aa)) are disordered. Residues 276–318 (DSVEPDGEDEDSKADDVEAEAEVETVEMEFGAEMDTEADEDVQ) show a composition bias toward acidic residues.

Belongs to the halobacterial gas vesicle GvpC family. Detected as 2 slightly different sizes in vivo; the proteins appears larger in SDS-PAGE probably due to the acidic tail.

It localises to the gas vesicle. Confers stability, involved in shaping gas vesicles (GV), hollow, gas filled proteinaceous nanostructures found in some microorganisms. They allow positioning of halobacteria at the optimal depth for growth in the poorly aerated, shallow brine pools of their habitat. Its function is as follows. Expression of a 9.5 kb mc-vac DNA fragment containing 2 divergently transcribed regions (gvpD-gvpE-gvpF-gvpG-gvpH-gvpI-gvpJ-gvpK-gvpL-gvpM and gvpA-gvpC-gvpN-gvpO) allows H.volcanii to produce gas vesicles. The polypeptide is Gas vesicle protein C (Haloferax mediterranei (strain ATCC 33500 / DSM 1411 / JCM 8866 / NBRC 14739 / NCIMB 2177 / R-4) (Halobacterium mediterranei)).